We begin with the raw amino-acid sequence, 171 residues long: Co-chaperone protein HscB (171 aa).

Residues 2 to 74 (DYFTLFGLPA…LMRAEYLLSL (73 aa)) enclose the J domain.

It belongs to the HscB family. In terms of assembly, interacts with HscA and stimulates its ATPase activity. Interacts with IscU.

Functionally, co-chaperone involved in the maturation of iron-sulfur cluster-containing proteins. Seems to help targeting proteins to be folded toward HscA. The protein is Co-chaperone protein HscB of Escherichia coli (strain SE11).